The following is a 147-amino-acid chain: Nucleoside diphosphate kinase (147 aa).

Lysine 11, phenylalanine 59, arginine 87, threonine 93, arginine 104, and asparagine 114 together coordinate ATP. Histidine 117 (pros-phosphohistidine intermediate) is an active-site residue.

It belongs to the NDK family. In terms of assembly, homotetramer. The cofactor is Mg(2+).

It is found in the cytoplasm. It carries out the reaction a 2'-deoxyribonucleoside 5'-diphosphate + ATP = a 2'-deoxyribonucleoside 5'-triphosphate + ADP. The enzyme catalyses a ribonucleoside 5'-diphosphate + ATP = a ribonucleoside 5'-triphosphate + ADP. Functionally, major role in the synthesis of nucleoside triphosphates other than ATP. The ATP gamma phosphate is transferred to the NDP beta phosphate via a ping-pong mechanism, using a phosphorylated active-site intermediate. This is Nucleoside diphosphate kinase from Anaeromyxobacter dehalogenans (strain 2CP-C).